Consider the following 417-residue polypeptide: Phosphoglycerate kinase (417 aa).

(2R)-3-phosphoglycerate contacts are provided by V23, D24, F25, N26, Q39, R40, S63, H64, G66, R67, L122, R123, H170, and R171. S203 is modified (phosphoserine). G214 is a binding site for ADP. Residue G214 coordinates CDP. AMP-binding residues include A215 and K216. Position 215 (A215) interacts with ATP. A215 provides a ligand contact to Mg(2+). D219 contacts CDP. D219 contacts Mg(2+). K220 is a binding site for AMP. An ATP-binding site is contributed by K220. Residue G238 participates in ADP binding. G238 is a CDP binding site. A239 and G313 together coordinate AMP. The ATP site is built by A239 and G313. Residues G338 and F343 each coordinate CDP. Residue F343 coordinates ADP. Residue E344 coordinates AMP. 3 residues coordinate ATP: E344, D375, and T376. D375 is a Mg(2+) binding site.

Belongs to the phosphoglycerate kinase family. In terms of assembly, monomer. It depends on Mg(2+) as a cofactor. Dephosphorylated by PTC1 and PTC2 at Ser-203; the protein is cytosolic when dephosphorylated.

It is found in the cytoplasm. It localises to the cytosol. The protein resides in the mitochondrion. The catalysed reaction is (2R)-3-phosphoglycerate + ATP = (2R)-3-phospho-glyceroyl phosphate + ADP. The protein operates within carbohydrate degradation; glycolysis; pyruvate from D-glyceraldehyde 3-phosphate: step 2/5. Its function is as follows. Catalyzes one of the two ATP producing reactions in the glycolytic pathway via the reversible conversion of 1,3-diphosphoglycerate to 3-phosphoglycerate. Both L- and D- forms of purine and pyrimidine nucleotides can be used as substrates, but the activity is much lower on pyrimidines. Negatively regulates the biosynthesis of acetyl-CoA from pyruvate in the mitochondrion and consequently also attenuates aflatoxin production. The chain is Phosphoglycerate kinase from Aspergillus flavus (strain ATCC 200026 / FGSC A1120 / IAM 13836 / NRRL 3357 / JCM 12722 / SRRC 167).